Here is a 1201-residue protein sequence, read N- to C-terminus: DNA-directed RNA polymerase subunit beta (1201 aa).

Residues 1165–1201 (DALSKFKQQQDEKAADKAAKADAAKPSETTNAQQDNQ) are disordered. Over residues 1172–1189 (QQQDEKAADKAAKADAAK) the composition is skewed to basic and acidic residues. Residues 1191-1201 (SETTNAQQDNQ) show a composition bias toward polar residues.

This sequence belongs to the RNA polymerase beta chain family. In terms of assembly, the RNAP catalytic core consists of 2 alpha, 1 beta, 1 beta' and 1 omega subunit. When a sigma factor is associated with the core the holoenzyme is formed, which can initiate transcription.

The enzyme catalyses RNA(n) + a ribonucleoside 5'-triphosphate = RNA(n+1) + diphosphate. Functionally, DNA-dependent RNA polymerase catalyzes the transcription of DNA into RNA using the four ribonucleoside triphosphates as substrates. This is DNA-directed RNA polymerase subunit beta from Lactiplantibacillus plantarum (strain ATCC BAA-793 / NCIMB 8826 / WCFS1) (Lactobacillus plantarum).